The sequence spans 129 residues: Small ribosomal subunit protein uS11 (129 aa).

The protein belongs to the universal ribosomal protein uS11 family. Part of the 30S ribosomal subunit. Interacts with proteins S7 and S18. Binds to IF-3.

In terms of biological role, located on the platform of the 30S subunit, it bridges several disparate RNA helices of the 16S rRNA. Forms part of the Shine-Dalgarno cleft in the 70S ribosome. The protein is Small ribosomal subunit protein uS11 of Aliivibrio fischeri (strain ATCC 700601 / ES114) (Vibrio fischeri).